We begin with the raw amino-acid sequence, 523 residues long: 2-hydroxyisoflavanone synthase (523 aa).

Residues L2–P22 form a helical membrane-spanning segment. C450 provides a ligand contact to heme.

The protein belongs to the cytochrome P450 family. Requires heme as cofactor.

It localises to the microsome membrane. The catalysed reaction is (2S)-liquiritigenin + reduced [NADPH--hemoprotein reductase] + O2 = (2R,3S)-2,4',7-trihydroxyisoflavanone + oxidized [NADPH--hemoprotein reductase] + H2O + H(+). It carries out the reaction (2S)-naringenin + reduced [NADPH--hemoprotein reductase] + O2 = 2-hydroxy-2,3-dihydrogenistein + oxidized [NADPH--hemoprotein reductase] + H2O + H(+). In terms of biological role, 2-hydroxyisoflavanone synthase, which catalyzes the hydroxylation associated with 1,2-aryl migration of flavanones. Converts liquiritigenin and naringenin into highly unstable precursors of the isoflavones daidzein and genistein. This chain is 2-hydroxyisoflavanone synthase (CYP93C2), found in Glycyrrhiza uralensis (Chinese licorice).